A 205-amino-acid chain; its full sequence is Ras-related protein Rab-18-B (205 aa).

GTP is bound by residues serine 17, glycine 20, lysine 21, serine 22, serine 23, aspartate 34, proline 35, threonine 40, glycine 66, lysine 123, aspartate 125, and alanine 152. A Mg(2+)-binding site is contributed by serine 22. 2 short sequence motifs (switch) span residues 31-45 (DTFDPELAATIGVDF) and 63-80 (DTAGQERFRTLTPSYYRG). Residue threonine 40 coordinates Mg(2+). Cysteine 198 carries the S-palmitoyl cysteine lipid modification. At cysteine 202 the chain carries Cysteine methyl ester. The S-geranylgeranyl cysteine moiety is linked to residue cysteine 202. Residues 203 to 205 (SLV) constitute a propeptide, removed in mature form.

Belongs to the small GTPase superfamily. Rab family. It depends on Mg(2+) as a cofactor.

It localises to the endoplasmic reticulum membrane. The protein localises to the golgi apparatus. Its subcellular location is the cis-Golgi network membrane. It is found in the lipid droplet. The protein resides in the apical cell membrane. The catalysed reaction is GTP + H2O = GDP + phosphate + H(+). Its activity is regulated as follows. Regulated by guanine nucleotide exchange factors (GEFs) which promote the exchange of bound GDP for free GTP. Regulated by GTPase activating proteins (GAPs) which increase the GTP hydrolysis activity at the ER membrane. Inhibited by GDP dissociation inhibitors (GDIs) which prevent Rab-GDP dissociation. Functionally, the small GTPases Rab are key regulators of intracellular membrane trafficking, from the formation of transport vesicles to their fusion with membranes. Rabs cycle between an inactive GDP-bound form and an active GTP-bound form that is able to recruit to membranes different sets of downstream effectors directly responsible for vesicle formation, movement, tethering and fusion. Required for the localization of ZFYVE1 to lipid droplets and for its function in mediating the formation of endoplasmic reticulum-lipid droplets (ER-LD) contacts. Also required for maintaining endoplasmic reticulum structure. Plays a role in apical endocytosis/recycling. Plays a key role in eye and brain development and neurodegeneration. The chain is Ras-related protein Rab-18-B (rab18b) from Danio rerio (Zebrafish).